The primary structure comprises 174 residues: Achaete-scute homolog 3 (174 aa).

The tract at residues 92–105 (AFIRKRNERERQRV) is basic motif. One can recognise a bHLH domain in the interval 92-144 (AFIRKRNERERQRVKCVNEGYARLRRHLPEDYLEKRLSKVETLRAAIKYISYL). Residues 106–144 (KCVNEGYARLRRHLPEDYLEKRLSKVETLRAAIKYISYL) form a helix-loop-helix motif region. The tract at residues 153–174 (SETKKNPRTASCGSLDPALRVI) is disordered.

As to quaternary structure, efficient DNA binding requires dimerization with another bHLH protein. Expressed in the salivary duct cells. Also expressed at lower levels in testis and epididymis. Expressed in the olfactory epithelium (OE), in a subset of apical microvillar cells.

It localises to the nucleus. Its function is as follows. Transcriptional repressor. Inhibits myogenesis. Plays a role in progenitor cells which differentiate into ductal and acinar, but not myoepithelial, cell lineages in the salivary glands. Involved in the functions of the microvillar cells and Bowman's glands and probably, in a non-cell-autonomous manner, in the development or regeneration of a complete olfactory epithelium (OE). This chain is Achaete-scute homolog 3 (Ascl3), found in Mus musculus (Mouse).